We begin with the raw amino-acid sequence, 126 residues long: Arginine decarboxylase proenzyme (126 aa).

Catalysis depends on Ser74, which acts as the Schiff-base intermediate with substrate; via pyruvic acid. Pyruvic acid (Ser); by autocatalysis is present on Ser74. The Proton acceptor; for processing activity role is filled by His79. The active-site Proton donor; for catalytic activity is Cys94.

Belongs to the prokaryotic AdoMetDC family. Type 1 subfamily. In terms of assembly, heterooctamer of four alpha and four beta chains arranged as a tetramer of alpha/beta heterodimers. Pyruvate serves as cofactor. Is synthesized initially as an inactive proenzyme. Formation of the active enzyme involves a self-maturation process in which the active site pyruvoyl group is generated from an internal serine residue via an autocatalytic post-translational modification. Two non-identical subunits are generated from the proenzyme in this reaction, and the pyruvate is formed at the N-terminus of the alpha chain, which is derived from the carboxyl end of the proenzyme. The post-translation cleavage follows an unusual pathway, termed non-hydrolytic serinolysis, in which the side chain hydroxyl group of the serine supplies its oxygen atom to form the C-terminus of the beta chain, while the remainder of the serine residue undergoes an oxidative deamination to produce ammonia and the pyruvoyl group blocking the N-terminus of the alpha chain.

It catalyses the reaction L-arginine + H(+) = agmatine + CO2. The protein operates within amine and polyamine biosynthesis; agmatine biosynthesis; agmatine from L-arginine: step 1/1. Functionally, specifically catalyzes the decarboxylation of L-arginine to agmatine. Has no S-adenosylmethionine decarboxylase (AdoMetDC) activity. This Pyrobaculum calidifontis (strain DSM 21063 / JCM 11548 / VA1) protein is Arginine decarboxylase proenzyme.